The sequence spans 239 residues: Ribosomal RNA small subunit methyltransferase G (239 aa).

Residues Gly-79, Phe-84, 130 to 131 (AE), and Arg-149 each bind S-adenosyl-L-methionine. Residues 218–239 (KKTKTPKKYPRQAGTPSKKPIS) are disordered.

This sequence belongs to the methyltransferase superfamily. RNA methyltransferase RsmG family.

Its subcellular location is the cytoplasm. Functionally, specifically methylates the N7 position of a guanine in 16S rRNA. In Leuconostoc mesenteroides subsp. mesenteroides (strain ATCC 8293 / DSM 20343 / BCRC 11652 / CCM 1803 / JCM 6124 / NCDO 523 / NBRC 100496 / NCIMB 8023 / NCTC 12954 / NRRL B-1118 / 37Y), this protein is Ribosomal RNA small subunit methyltransferase G.